The sequence spans 454 residues: Glutamyl-tRNA reductase (454 aa).

Substrate-binding positions include 49–52, serine 109, 114–116, and glutamine 120; these read TCNR and ETQ. Cysteine 50 serves as the catalytic Nucleophile. Position 189-194 (189-194) interacts with NADP(+); that stretch reads GAGKMG.

The protein belongs to the glutamyl-tRNA reductase family. As to quaternary structure, homodimer.

It catalyses the reaction (S)-4-amino-5-oxopentanoate + tRNA(Glu) + NADP(+) = L-glutamyl-tRNA(Glu) + NADPH + H(+). It participates in porphyrin-containing compound metabolism; protoporphyrin-IX biosynthesis; 5-aminolevulinate from L-glutamyl-tRNA(Glu): step 1/2. Its function is as follows. Catalyzes the NADPH-dependent reduction of glutamyl-tRNA(Glu) to glutamate 1-semialdehyde (GSA). This is Glutamyl-tRNA reductase from Geobacillus kaustophilus (strain HTA426).